The chain runs to 88 residues: FAD assembly factor SdhE (88 aa).

This sequence belongs to the SdhE FAD assembly factor family. In terms of assembly, monomer. Makes weak or transient interactions with SdhA. Interacts with YgfX. Interacts with FrdA.

The protein resides in the cytoplasm. It functions in the pathway antibiotic biosynthesis; prodigiosin biosynthesis. In terms of biological role, an FAD assembly protein, which accelerates covalent attachment of the cofactor into other proteins. Plays an essential role in the assembly of succinate dehydrogenase (SDH, respiratory complex II), an enzyme complex that is a component of both the tricarboxylic acid cycle and the electron transport chain, and which couples the oxidation of succinate to fumarate with the reduction of ubiquinone (coenzyme Q) to ubiquinol. Required for flavinylation (covalent attachment of FAD) of the flavoprotein subunit SdhA of SDH. Required for flavinylation of the flavoprotein subunit FrdA of fumarate reductase (FRD). Flavinylation of SDH and FRD occurs in a similar but not identical manner, as site-specific mutations display subtle differences between them. Flavinylates SdhA in vivo in the absence of the other SDH subunits; SdhE mutants that do not flavinylate also interfere with wild-type activity in a possible dominant-negative fashion. Weakly binds to FAD and facilitates its binding to SdhA. Required for production of prodigiosin antibiotic (Pig); overproduction of SdhE in a deletion mutant leads to decreased synthesis of Pig compared to wild-type. Capable of flavinylating A.pasteurianus SdhA when the SDH operon and this gene are expressed in G.oxydans; flavinylation of SdhA is detected only in the presence of sdhE. This chain is FAD assembly factor SdhE, found in Serratia sp. (strain ATCC 39006) (Prodigiosinella confusarubida).